The following is a 203-amino-acid chain: Ribonuclease HII (203 aa).

In terms of domain architecture, RNase H type-2 spans 15–201 (LLVAGLDEAG…VAQAPLRFPE (187 aa)). A divalent metal cation-binding residues include Asp-21, Glu-22, and Asp-111.

It belongs to the RNase HII family. It depends on Mn(2+) as a cofactor. Mg(2+) serves as cofactor.

The protein localises to the cytoplasm. It carries out the reaction Endonucleolytic cleavage to 5'-phosphomonoester.. Endonuclease that specifically degrades the RNA of RNA-DNA hybrids. This is Ribonuclease HII from Thermus thermophilus (strain ATCC 27634 / DSM 579 / HB8).